A 471-amino-acid polypeptide reads, in one-letter code: Protoporphyrinogen oxidase (471 aa).

FAD is bound by residues 16–21 (GGGISG), 39–40 (ES), Ala-47, 61–64 (GPNS), Val-251, Trp-408, and 446–448 (VGL).

The protein belongs to the protoporphyrinogen/coproporphyrinogen oxidase family. Protoporphyrinogen oxidase subfamily. In terms of assembly, monomer. Homodimer. FAD is required as a cofactor.

The protein localises to the cytoplasm. Its subcellular location is the cell membrane. It carries out the reaction protoporphyrinogen IX + 3 O2 = protoporphyrin IX + 3 H2O2. It participates in porphyrin-containing compound metabolism; protoporphyrin-IX biosynthesis; protoporphyrin-IX from protoporphyrinogen-IX: step 1/1. Strongly inhibited by acifluorfen. In terms of biological role, catalyzes the 6-electron oxidation of protoporphyrinogen-IX to form protoporphyrin-IX. Does not oxidize coproporphyrinogen III. Involved in the classical protoporphyrin-dependent (PPD) heme b biosynthesis. The chain is Protoporphyrinogen oxidase from Myxococcus xanthus.